The following is a 532-amino-acid chain: Intercellular adhesion molecule 1 (532 aa).

The N-terminal stretch at 1–27 (MAPSGPQPALPILVVLLGALLLGPGNA) is a signal peptide. The Extracellular portion of the chain corresponds to 28–480 (QTSVFPPEVI…TVNVLSPRYE (453 aa)). Ig-like C2-type domains lie at 41–103 (GGSV…QSSA) and 128–193 (GKNL…LDLR). Asparagine 47 carries N-linked (GlcNAc...) asparagine glycosylation. Cystine bridges form between cysteine 48/cysteine 92 and cysteine 52/cysteine 96. Asparagine 130 and asparagine 145 each carry an N-linked (GlcNAc...) asparagine glycan. Cysteines 135 and 186 form a disulfide. The Cell attachment site; atypical signature appears at 152 to 154 (RGE). Asparagine 183, asparagine 202, asparagine 267, asparagine 296, and asparagine 316 each carry an N-linked (GlcNAc...) asparagine glycan. Residues 230–297 (DTQGTVVCSL…LLCGVMLGNQ (68 aa)) enclose the Ig-like C2-type 3 domain. Cysteine 237 and cysteine 290 are disulfide-bonded. The region spanning 325–378 (GTEVIVECEAHPRAKVMLNGVPAQPPGPRAQFLLKATPEDNGRSFSCSATLEVA) is the Ig-like C2-type 4 domain. A disulfide bridge connects residues cysteine 332 and cysteine 371. N-linked (GlcNAc...) asparagine glycosylation is found at asparagine 385 and asparagine 406. Disulfide bonds link cysteine 403-cysteine 419, cysteine 419-cysteine 457, and cysteine 431-cysteine 457. The 53-residue stretch at 412-464 (NSQQTPMCQAWGNPLPQLKCLKDGTFPLPIGQSVTVTRDLEGTYLCQARSTRG) folds into the Ig-like C2-type 5 domain. Residues 481-503 (VVIIPVVAAAVILGTAGVATYLY) traverse the membrane as a helical segment. The Cytoplasmic portion of the chain corresponds to 504-532 (NRQRKIRKYRLQQAQNGTPMKPNTQATPP). The disordered stretch occupies residues 513–532 (RLQQAQNGTPMKPNTQATPP). Residues 515 to 532 (QQAQNGTPMKPNTQATPP) are compositionally biased toward polar residues. Phosphothreonine occurs at positions 521 and 530.

It belongs to the immunoglobulin superfamily. ICAM family. Homodimer. Interacts with MUC1 and promotes cell aggregation in epithelial cells. Interacts with ARHGEF26/SGEF. Interacts (on T cell side) with CD81, CD247 and CD9 at immunological synapses between antigen-presenting cells and T cells. Monoubiquitinated, which is promoted by MARCH9 and leads to endocytosis.

Its subcellular location is the membrane. ICAM proteins are ligands for the leukocyte adhesion protein LFA-1 (integrin alpha-L/beta-2). During leukocyte trans-endothelial migration, ICAM1 engagement promotes the assembly of endothelial apical cups through ARHGEF26/SGEF and RHOG activation. The chain is Intercellular adhesion molecule 1 (ICAM1) from Macaca mulatta (Rhesus macaque).